The chain runs to 568 residues: Phosphoribosylaminoimidazole carboxylase (568 aa).

One can recognise an ATP-grasp domain in the interval lysine 110 to threonine 298. Position 138–193 (glycine 138–alanine 193) interacts with ATP.

This sequence in the C-terminal section; belongs to the AIR carboxylase family. Class I subfamily.

The enzyme catalyses 5-amino-1-(5-phospho-D-ribosyl)imidazole-4-carboxylate + H(+) = 5-amino-1-(5-phospho-beta-D-ribosyl)imidazole + CO2. Its pathway is purine metabolism; IMP biosynthesis via de novo pathway; 5-amino-1-(5-phospho-D-ribosyl)imidazole-4-carboxylate from 5-amino-1-(5-phospho-D-ribosyl)imidazole (carboxylase route): step 1/1. This is Phosphoribosylaminoimidazole carboxylase (ADE2) from Candida albicans (strain SC5314 / ATCC MYA-2876) (Yeast).